We begin with the raw amino-acid sequence, 281 residues long: Energy-coupling factor transporter ATP-binding protein EcfA1 (281 aa).

The 236-residue stretch at 7-242 (ISVEDIVFRY…NKELVRIGLD (236 aa)) folds into the ABC transporter domain. Residue 42 to 49 (GHNGSGKS) coordinates ATP. The active-site Proton acceptor is the Glu-168.

Belongs to the ABC transporter superfamily. Energy-coupling factor EcfA family. Forms a stable energy-coupling factor (ECF) transporter complex composed of 2 membrane-embedded substrate-binding proteins (S component), 2 ATP-binding proteins (A component) and 2 transmembrane proteins (T component).

It is found in the cell membrane. Its function is as follows. ATP-binding (A) component of a common energy-coupling factor (ECF) ABC-transporter complex. Unlike classic ABC transporters this ECF transporter provides the energy necessary to transport a number of different substrates. The protein is Energy-coupling factor transporter ATP-binding protein EcfA1 of Bacillus subtilis (strain 168).